The primary structure comprises 296 residues: Protoheme IX farnesyltransferase (296 aa).

9 helical membrane-spanning segments follow: residues 13 to 33 (IIFG…KGII), 35 to 55 (YPLF…GCVF), 84 to 104 (VTLI…YIAA), 107 to 127 (LAMW…SLYM), 132 to 152 (VYGT…GYCA), 162 to 182 (LILL…IAIF), 208 to 228 (ITLY…VGYA), 229 to 249 (GYKY…MALR), and 264 to 284 (FVFS…DFSV).

Belongs to the UbiA prenyltransferase family. Protoheme IX farnesyltransferase subfamily.

It localises to the cell inner membrane. The enzyme catalyses heme b + (2E,6E)-farnesyl diphosphate + H2O = Fe(II)-heme o + diphosphate. It participates in porphyrin-containing compound metabolism; heme O biosynthesis; heme O from protoheme: step 1/1. Functionally, converts heme B (protoheme IX) to heme O by substitution of the vinyl group on carbon 2 of heme B porphyrin ring with a hydroxyethyl farnesyl side group. This Edwardsiella ictaluri (strain 93-146) protein is Protoheme IX farnesyltransferase.